We begin with the raw amino-acid sequence, 598 residues long: Nuclear receptor subfamily 4 group A member 2 (598 aa).

A disordered region spans residues 1–22 (MPCVQAQYGSSPQGASPASQSY). Residues 8 to 22 (YGSSPQGASPASQSY) are compositionally biased toward low complexity. The nuclear receptor DNA-binding region spans 260–335 (EGLCAVCGDN…VGMVKEVVRT (76 aa)). 2 consecutive NR C4-type zinc fingers follow at residues 263–283 (CAVC…CEGC) and 299–323 (CLAN…FQKC). Positions 287–314 (FKRTVQKNAKYVCLANKNCPVDKRRRNR) match the Bipartite nuclear localization signal (NLS1) motif. The interval 337-361 (SLKGRRGRLPSKPKSPQEPSPPSPP) is disordered. The short motif at 338–350 (LKGRRGRLPSKPK) is the Nuclear localization signal (NLS1) element. Positions 352–361 (PQEPSPPSPP) are enriched in pro residues. The 236-residue stretch at 360–595 (PPVSLISALV…AIIDKLFLDT (236 aa)) folds into the NR LBD domain. The nuclear export sequence (NES1) motif lies at 443–452 (FLELFVLRLA). The nuclear export sequence (NES2) signature appears at 568–577 (QGLQRIFYLK).

The protein belongs to the nuclear hormone receptor family. NR4 subfamily. Interacts with SFPQ, NCOR2, SIN3A and HADC1. The interaction with NCOR2 increases in the absence of PITX3. Interacts with PER2. In terms of tissue distribution, expressed in a number of cell lines of T-cell, B-cell and fibroblast origin. Strong expression in brain tissue.

It is found in the cytoplasm. It localises to the nucleus. Functionally, transcriptional regulator which is important for the differentiation and maintenance of meso-diencephalic dopaminergic (mdDA) neurons during development. It is crucial for expression of a set of genes such as SLC6A3, SLC18A2, TH and DRD2 which are essential for development of mdDA neurons. The polypeptide is Nuclear receptor subfamily 4 group A member 2 (NR4A2) (Homo sapiens (Human)).